The sequence spans 238 residues: MSDVTTAEFNEEGKYLRKIRSFVLREGRLTKGQAQAIEAHWPTMGLDYTPEAIDLVKIFGREADTVLEIGFGMGGSLVEMAAAAPELNYIGIEVHKPGVGACLGVAGEAKVTNLRVYHHDAMEVLEHSIADGSLSRVQLFFPDPWHKKRHHKRRIVQAEFAELIRRKLKLGGVFHMATDWENYSEHMLEVMNLAPGYKNQSPTGTVVERPDHRPLTKFEARGHRLGHGVWDIMFERIS.

Residues Glu-68, Glu-93, Asp-120, and Asp-143 each contribute to the S-adenosyl-L-methionine site. Asp-143 is an active-site residue. Residues Lys-147, Asp-179, and Thr-216–Glu-219 contribute to the substrate site.

The protein belongs to the class I-like SAM-binding methyltransferase superfamily. TrmB family.

The enzyme catalyses guanosine(46) in tRNA + S-adenosyl-L-methionine = N(7)-methylguanosine(46) in tRNA + S-adenosyl-L-homocysteine. It functions in the pathway tRNA modification; N(7)-methylguanine-tRNA biosynthesis. Catalyzes the formation of N(7)-methylguanine at position 46 (m7G46) in tRNA. This is tRNA (guanine-N(7)-)-methyltransferase from Shewanella denitrificans (strain OS217 / ATCC BAA-1090 / DSM 15013).